Reading from the N-terminus, the 352-residue chain is Ubiquitin thioesterase otulin (352 aa).

The segment at 1 to 49 (MSRGTMPQPGAWPGASCAETPAREAGAAARDGGKVTAGAQPRAATRCPA) is disordered. Residues 18–30 (AETPAREAGAAAR) are compositionally biased toward low complexity. Positions 49 to 73 (AEHEEDMYRAADEIEKEKELLIHER) form a coiled coil. The short motif at 52–57 (EEDMYR) is the PIM motif element. Phosphotyrosine is present on tyrosine 56. Linear diubiquitin binding regions lie at residues 95-96 (EW) and 124-126 (RGD). Positions 118–346 (TSIRRVRGDN…DRHYNIPVRV (229 aa)) constitute an OTU domain. Aspartate 126 is a catalytic residue. Cysteine 129 serves as the catalytic Nucleophile. 3 linear diubiquitin binding regions span residues 255-259 (FFSVL), 283-289 (TGGLEQV), and 336-338 (DDR). The active site involves histidine 339. Residues 349 to 352 (ETSV) carry the PDZ-binding motif.

This sequence belongs to the peptidase C65 family. Otulin subfamily. As to quaternary structure, interacts (via the PUB domain) with RNF31 (via the PIM motif); the interaction is direct. Interacts with DVL2. Ubiquitinated. In terms of processing, acetylated. Post-translationally, phosphorylated. Phosphorylation at Tyr-56 prevents interaction with RNF31; dephosphorylation promotes interaction with RNF31 and the LUBAC complex.

Its subcellular location is the cytoplasm. It carries out the reaction Thiol-dependent hydrolysis of ester, thioester, amide, peptide and isopeptide bonds formed by the C-terminal Gly of ubiquitin (a 76-residue protein attached to proteins as an intracellular targeting signal).. Its function is as follows. Deubiquitinase that specifically removes linear ('Met-1'-linked) polyubiquitin chains to substrates and acts as a regulator of angiogenesis and innate immune response. Required during angiogenesis, craniofacial and neuronal development by regulating the canonical Wnt signaling together with the LUBAC complex. Acts as a negative regulator of NF-kappa-B by regulating the activity of the LUBAC complex. OTULIN function is mainly restricted to homeostasis of the LUBAC complex: acts by removing 'Met-1'-linked autoubiquitination of the LUBAC complex, thereby preventing inactivation of the LUBAC complex. Acts as a key negative regulator of inflammation by restricting spontaneous inflammation and maintaining immune homeostasis. In myeloid cell, required to prevent unwarranted secretion of cytokines leading to inflammation and autoimmunity by restricting linear polyubiquitin formation. Plays a role in innate immune response by restricting linear polyubiquitin formation on LUBAC complex in response to NOD2 stimulation, probably to limit NOD2-dependent pro-inflammatory signaling. In Mus musculus (Mouse), this protein is Ubiquitin thioesterase otulin.